The sequence spans 296 residues: Homoserine kinase (296 aa).

85–95 serves as a coordination point for ATP; it reads PLSRGLGSSAA.

Belongs to the GHMP kinase family. Homoserine kinase subfamily.

The protein resides in the cytoplasm. The catalysed reaction is L-homoserine + ATP = O-phospho-L-homoserine + ADP + H(+). It participates in amino-acid biosynthesis; L-threonine biosynthesis; L-threonine from L-aspartate: step 4/5. Its function is as follows. Catalyzes the ATP-dependent phosphorylation of L-homoserine to L-homoserine phosphate. The sequence is that of Homoserine kinase from Clostridium acetobutylicum (strain ATCC 824 / DSM 792 / JCM 1419 / IAM 19013 / LMG 5710 / NBRC 13948 / NRRL B-527 / VKM B-1787 / 2291 / W).